The following is a 119-amino-acid chain: Large ribosomal subunit protein bL20 (119 aa).

Belongs to the bacterial ribosomal protein bL20 family.

Its function is as follows. Binds directly to 23S ribosomal RNA and is necessary for the in vitro assembly process of the 50S ribosomal subunit. It is not involved in the protein synthesizing functions of that subunit. This chain is Large ribosomal subunit protein bL20, found in Bordetella bronchiseptica (strain ATCC BAA-588 / NCTC 13252 / RB50) (Alcaligenes bronchisepticus).